Reading from the N-terminus, the 346-residue chain is Biotin synthase (346 aa).

Residues 38-256 form the Radical SAM core domain; it reads RQVQVSTLLS…IAVARIMMPT (219 aa). [4Fe-4S] cluster-binding residues include cysteine 53, cysteine 57, and cysteine 60. The [2Fe-2S] cluster site is built by cysteine 97, cysteine 128, cysteine 188, and arginine 260.

The protein belongs to the radical SAM superfamily. Biotin synthase family. As to quaternary structure, homodimer. The cofactor is [4Fe-4S] cluster. Requires [2Fe-2S] cluster as cofactor.

The catalysed reaction is (4R,5S)-dethiobiotin + (sulfur carrier)-SH + 2 reduced [2Fe-2S]-[ferredoxin] + 2 S-adenosyl-L-methionine = (sulfur carrier)-H + biotin + 2 5'-deoxyadenosine + 2 L-methionine + 2 oxidized [2Fe-2S]-[ferredoxin]. The protein operates within cofactor biosynthesis; biotin biosynthesis; biotin from 7,8-diaminononanoate: step 2/2. In terms of biological role, catalyzes the conversion of dethiobiotin (DTB) to biotin by the insertion of a sulfur atom into dethiobiotin via a radical-based mechanism. The sequence is that of Biotin synthase from Pseudescherichia vulneris (Escherichia vulneris).